Here is a 340-residue protein sequence, read N- to C-terminus: Ketol-acid reductoisomerase (NADP(+)) (340 aa).

A KARI N-terminal Rossmann domain is found at 2–181 (AKVFYNGDIN…GSARAGVIET (180 aa)). Residues 25–28 (YGSQ), arginine 48, serine 52, and 82–85 (DEHQ) each bind NADP(+). Histidine 107 is an active-site residue. Residue glycine 133 coordinates NADP(+). Positions 182–327 (TFQEETETDL…RELREMMPFV (146 aa)) constitute a KARI C-terminal knotted domain. Positions 190, 194, 226, and 230 each coordinate Mg(2+). Residue serine 251 coordinates substrate.

Belongs to the ketol-acid reductoisomerase family. Mg(2+) serves as cofactor.

It carries out the reaction (2R)-2,3-dihydroxy-3-methylbutanoate + NADP(+) = (2S)-2-acetolactate + NADPH + H(+). It catalyses the reaction (2R,3R)-2,3-dihydroxy-3-methylpentanoate + NADP(+) = (S)-2-ethyl-2-hydroxy-3-oxobutanoate + NADPH + H(+). It functions in the pathway amino-acid biosynthesis; L-isoleucine biosynthesis; L-isoleucine from 2-oxobutanoate: step 2/4. Its pathway is amino-acid biosynthesis; L-valine biosynthesis; L-valine from pyruvate: step 2/4. Functionally, involved in the biosynthesis of branched-chain amino acids (BCAA). Catalyzes an alkyl-migration followed by a ketol-acid reduction of (S)-2-acetolactate (S2AL) to yield (R)-2,3-dihydroxy-isovalerate. In the isomerase reaction, S2AL is rearranged via a Mg-dependent methyl migration to produce 3-hydroxy-3-methyl-2-ketobutyrate (HMKB). In the reductase reaction, this 2-ketoacid undergoes a metal-dependent reduction by NADPH to yield (R)-2,3-dihydroxy-isovalerate. This chain is Ketol-acid reductoisomerase (NADP(+)), found in Halalkalibacterium halodurans (strain ATCC BAA-125 / DSM 18197 / FERM 7344 / JCM 9153 / C-125) (Bacillus halodurans).